The chain runs to 359 residues: Dihydroorotate dehydrogenase (quinone) (359 aa).

Residues 68–72 (AGFDK) and A92 contribute to the FMN site. Residue K72 coordinates substrate. 117–121 (NAYGF) contacts substrate. Positions 146 and 179 each coordinate FMN. A substrate-binding site is contributed by N179. The active-site Nucleophile is the S182. Residue N184 participates in substrate binding. Residues K215 and T243 each coordinate FMN. Residue 244 to 245 (NT) participates in substrate binding. Residues G263, G292, and 313-314 (YT) each bind FMN.

Belongs to the dihydroorotate dehydrogenase family. Type 2 subfamily. In terms of assembly, monomer. FMN serves as cofactor.

It is found in the cell membrane. The catalysed reaction is (S)-dihydroorotate + a quinone = orotate + a quinol. It functions in the pathway pyrimidine metabolism; UMP biosynthesis via de novo pathway; orotate from (S)-dihydroorotate (quinone route): step 1/1. Its function is as follows. Catalyzes the conversion of dihydroorotate to orotate with quinone as electron acceptor. The polypeptide is Dihydroorotate dehydrogenase (quinone) (Nautilia profundicola (strain ATCC BAA-1463 / DSM 18972 / AmH)).